The sequence spans 336 residues: MSEMYSAPVTVLGAGSYGTALAIALARNGHKTYLWGHQPEKMAVLATERMNNAFLPDIAFPDALEIESDLVQAIAKAKDILIVVPSHVFADVLKQIKPLLSAHHRIMWATKGLERNTGRLLQTVAQEILGNQYPLAVLSGPTFAKELAQGLPTAIALSSTDSQFADEMQQRIHCAKAFRVYLNNDMIGVQLGGAIKNVIAIGAGISDGMGFGANARTALITRGLAEISRLGASLGANANTFMGMAGLGDLVLTCTDNQSRNRRFGLMLGQGKSAEEAMAEIGQVVEGFYNTKEAYLLAQTQGVEMPIVEQIYQMLFCGKNAHDVATSLLGRERKGE.

4 residues coordinate NADPH: Ser16, Tyr17, His37, and Lys111. Residues Lys111, Gly140, and Thr142 each contribute to the sn-glycerol 3-phosphate site. Ala144 is a binding site for NADPH. The sn-glycerol 3-phosphate site is built by Lys196, Asp249, Ser259, Arg260, and Asn261. Lys196 acts as the Proton acceptor in catalysis. Arg260 contacts NADPH. Val284 and Glu286 together coordinate NADPH.

It belongs to the NAD-dependent glycerol-3-phosphate dehydrogenase family.

The protein resides in the cytoplasm. It catalyses the reaction sn-glycerol 3-phosphate + NAD(+) = dihydroxyacetone phosphate + NADH + H(+). The catalysed reaction is sn-glycerol 3-phosphate + NADP(+) = dihydroxyacetone phosphate + NADPH + H(+). It functions in the pathway membrane lipid metabolism; glycerophospholipid metabolism. Its function is as follows. Catalyzes the reduction of the glycolytic intermediate dihydroxyacetone phosphate (DHAP) to sn-glycerol 3-phosphate (G3P), the key precursor for phospholipid synthesis. This is Glycerol-3-phosphate dehydrogenase [NAD(P)+] from Actinobacillus pleuropneumoniae serotype 5b (strain L20).